A 2849-amino-acid chain; its full sequence is Polycystin-1-like protein 1 (2849 aa).

Over 1–1748 the chain is Extracellular; that stretch reads MAEEAAQNIS…SDISKLQSHP (1748 aa). N-linked (GlcNAc...) asparagine glycans are attached at residues Asn-8, Asn-295, Asn-338, Asn-376, Asn-447, Asn-482, Asn-514, Asn-605, Asn-657, Asn-751, Asn-875, Asn-926, and Asn-937. 2 PKD domains span residues 508-590 and 592-673; these read SVSV…VQKK and VANR…VCEP. One can recognise an REJ domain in the interval 674 to 1571; that stretch reads CQPPLVKNMG…GEEDGLDNRR (898 aa). A compositionally biased stretch (low complexity) spans 970-987; that stretch reads NLLPTEPGTADPDATTTP. Disordered stretches follow at residues 970-1068 and 1081-1118; these read NLLP…PHLS and IPSG…DPSL. The span at 1053–1068 shows a compositional bias: basic and acidic residues; it reads RSERSQPTHSPDPHLS. N-linked (GlcNAc...) asparagine glycans are attached at residues Asn-1233, Asn-1301, Asn-1306, Asn-1572, Asn-1681, and Asn-1716. The 149-residue stretch at 1587-1735 folds into the GAIN-B domain; sequence QFTELSENPQ…ALLRRKLKAS (149 aa). Cys-1691 and Cys-1717 are joined by a disulfide. The GPS stretch occupies residues 1691 to 1735; sequence CLFWDKREWKSERFSPQPGTSPEKVNCSYHRLAAFALLRRKLKAS. A helical membrane pass occupies residues 1749–1769; the sequence is ENLLPSIFIMGSVILYGFLVA. At 1770–1956 the chain is on the cytoplasmic side; the sequence is KSRQVDHHEK…SSSRYLHTPR (187 aa). Residues 1796–1913 enclose the PLAT domain; the sequence is QLYAVVIDTG…HDGRVERELT (118 aa). The chain crosses the membrane as a helical span at residues 1957 to 1977; it reads LTVSFSLLCVYACLTALVAAG. Residues 1978 to 1992 lie on the Extracellular side of the membrane; sequence GQEQPHLDVSPTLGS. A helical membrane pass occupies residues 1993–2013; sequence FRVGLLCTLLASPGAQLLSLL. The Cytoplasmic portion of the chain corresponds to 2014–2135; that stretch reads FRLSKEAPGS…SRALQPWWSS (122 aa). The segment at 2023 to 2089 is disordered; it reads SARVEPHSPL…GTACPAPKLQ (67 aa). The chain crosses the membrane as a helical span at residues 2136–2156; the sequence is AVWAICGTASLACSLGTGFLA. The Extracellular segment spans residues 2157–2174; the sequence is YRFGQEQCVQWLHLLSLS. A helical membrane pass occupies residues 2175 to 2195; it reads VVCCIFITQPLMVCLMALGFA. At 2196 to 2281 the chain is on the cytoplasmic side; the sequence is WKRRADNHFF…QRMRRESRTR (86 aa). The chain crosses the membrane as a helical span at residues 2282-2302; the sequence is AALRDISMDILMLLLLLCVIY. Residues 2303 to 2522 lie on the Extracellular side of the membrane; that stretch reads GRFSQDEYSL…FRSDSALQYH (220 aa). Asn-2426 carries an N-linked (GlcNAc...) asparagine glycan. The helical transmembrane segment at 2523–2543 threads the bilayer; it reads LMLPQLVFLALSLIHLCVQLY. The Cytoplasmic portion of the chain corresponds to 2544–2562; that stretch reads RMMDKGVLSYWRKPRNWLE. A helical transmembrane segment spans residues 2563–2583; it reads LSVVGVSLTYYAVSGHLVTLA. The Extracellular portion of the chain corresponds to 2584-2616; the sequence is GDVTNQFHRGLCRAFMDLTLMASWNQRARWLRG. A helical transmembrane segment spans residues 2617 to 2637; that stretch reads ILLFLFTLKCVYLPGIQNTMA. At 2638 to 2646 the chain is on the cytoplasmic side; the sequence is SCSSMMRHS. Residues 2647 to 2667 traverse the membrane as a helical segment; that stretch reads LPSIFVAGLVGALMLAALSHL. The Extracellular portion of the chain corresponds to 2668–2711; it reads HRFLLSMWVLPPGTFTDAFPGLLFHFPRRSQKDCLLGLSKSDQR. Residues 2712 to 2732 traverse the membrane as a helical segment; it reads AMACYFGILLIVSATLCFGML. At 2733 to 2849 the chain is on the cytoplasmic side; the sequence is RGFLMTLPQK…AAEPADIKDF (117 aa).

The protein belongs to the polycystin family. As to quaternary structure, heterodimer. Interacts with PKD2 to form a calcium channel. Interacts with PKD2L1; to form ciliary calcium channel. May interact with GNA12, GNAS, GNAI1 and GNAI2. In terms of tissue distribution, detected in testis and in fetal and adult heart.

The protein resides in the cell projection. It is found in the cilium membrane. Its function is as follows. Component of a calcium-permeant ion channel formed by PKD1L2 and PKD1L1 in primary cilia, where it controls cilium calcium concentration, without affecting cytoplasmic calcium concentration, and regulates sonic hedgehog/SHH signaling and GLI2 transcription. The PKD1L1:PKD2L1 channel complex is mechanosensitive only at high pressures and is highly temperature sensitive. Also involved in left/right axis specification downstream of nodal flow by forming a complex with PKD2 in cilia to facilitate flow detection in left/right patterning. May function as a G-protein-coupled receptor. The protein is Polycystin-1-like protein 1 of Homo sapiens (Human).